The sequence spans 228 residues: UPF0173 metal-dependent hydrolase lwe1590 (228 aa).

This sequence belongs to the UPF0173 family.

The sequence is that of UPF0173 metal-dependent hydrolase lwe1590 from Listeria welshimeri serovar 6b (strain ATCC 35897 / DSM 20650 / CCUG 15529 / CIP 8149 / NCTC 11857 / SLCC 5334 / V8).